Reading from the N-terminus, the 223-residue chain is Deoxyribose-phosphate aldolase (223 aa).

Catalysis depends on D89, which acts as the Proton donor/acceptor. K154 serves as the catalytic Schiff-base intermediate with acetaldehyde. The active-site Proton donor/acceptor is K183.

The protein belongs to the DeoC/FbaB aldolase family. DeoC type 1 subfamily.

It localises to the cytoplasm. The enzyme catalyses 2-deoxy-D-ribose 5-phosphate = D-glyceraldehyde 3-phosphate + acetaldehyde. Its pathway is carbohydrate degradation; 2-deoxy-D-ribose 1-phosphate degradation; D-glyceraldehyde 3-phosphate and acetaldehyde from 2-deoxy-alpha-D-ribose 1-phosphate: step 2/2. Functionally, catalyzes a reversible aldol reaction between acetaldehyde and D-glyceraldehyde 3-phosphate to generate 2-deoxy-D-ribose 5-phosphate. In Thermoanaerobacter pseudethanolicus (strain ATCC 33223 / 39E) (Clostridium thermohydrosulfuricum), this protein is Deoxyribose-phosphate aldolase.